Consider the following 122-residue polypeptide: Acidic phospholipase A2 Tpu-E6b (122 aa).

Cystine bridges form between Cys-26-Cys-115, Cys-28-Cys-44, Cys-43-Cys-95, Cys-49-Cys-122, Cys-50-Cys-88, Cys-57-Cys-81, and Cys-75-Cys-86. The Ca(2+) site is built by Tyr-27, Gly-29, and Gly-31. The active site involves His-47. Asp-48 lines the Ca(2+) pocket. Residue Asp-89 is part of the active site.

Monomer. It depends on Ca(2+) as a cofactor. As to expression, expressed by the venom gland.

It is found in the secreted. The catalysed reaction is a 1,2-diacyl-sn-glycero-3-phosphocholine + H2O = a 1-acyl-sn-glycero-3-phosphocholine + a fatty acid + H(+). Its function is as follows. Snake venom phospholipase A2 (PLA2) that weakly inhibits ADP-induced platelet aggregation when tested on platelet rich plasma from human and rabbit blood (15-25% of inhibition at 5-10 ug of enzyme). Exhibits moderate hydrolytic activities toward L-dipalmitoyl phosphatidylcholine. PLA2 catalyzes the calcium-dependent hydrolysis of the 2-acyl groups in 3-sn-phosphoglycerides. This Craspedocephalus puniceus (Flat-nosed pitviper) protein is Acidic phospholipase A2 Tpu-E6b.